A 191-amino-acid chain; its full sequence is Threonylcarbamoyl-AMP synthase (191 aa).

Residues 10 to 191 enclose the YrdC-like domain; sequence VPKLTQCVRT…DLYTDAIIRA (182 aa).

The protein belongs to the SUA5 family. TsaC subfamily.

It is found in the cytoplasm. The catalysed reaction is L-threonine + hydrogencarbonate + ATP = L-threonylcarbamoyladenylate + diphosphate + H2O. In terms of biological role, required for the formation of a threonylcarbamoyl group on adenosine at position 37 (t(6)A37) in tRNAs that read codons beginning with adenine. Catalyzes the conversion of L-threonine, HCO(3)(-)/CO(2) and ATP to give threonylcarbamoyl-AMP (TC-AMP) as the acyladenylate intermediate, with the release of diphosphate. The sequence is that of Threonylcarbamoyl-AMP synthase from Saccharophagus degradans (strain 2-40 / ATCC 43961 / DSM 17024).